The following is a 303-amino-acid chain: Mycothiol acetyltransferase (303 aa).

N-acetyltransferase domains follow at residues 10-156 (ALPG…LAVP) and 162-303 (LAVR…SGPR). Position 41 (glutamate 41) interacts with 1D-myo-inositol 2-(L-cysteinylamino)-2-deoxy-alpha-D-glucopyranoside. 86-88 (LLV) serves as a coordination point for acetyl-CoA. The 1D-myo-inositol 2-(L-cysteinylamino)-2-deoxy-alpha-D-glucopyranoside site is built by glutamate 189, lysine 228, and glutamate 235. Acetyl-CoA is bound by residues 239–241 (LGV) and 246–252 (SGAGLGR). Tyrosine 272 is a 1D-myo-inositol 2-(L-cysteinylamino)-2-deoxy-alpha-D-glucopyranoside binding site. 277–282 (NLRAVR) is an acetyl-CoA binding site.

The protein belongs to the acetyltransferase family. MshD subfamily. In terms of assembly, monomer.

The catalysed reaction is 1D-myo-inositol 2-(L-cysteinylamino)-2-deoxy-alpha-D-glucopyranoside + acetyl-CoA = mycothiol + CoA + H(+). In terms of biological role, catalyzes the transfer of acetyl from acetyl-CoA to desacetylmycothiol (Cys-GlcN-Ins) to form mycothiol. The protein is Mycothiol acetyltransferase of Kineococcus radiotolerans (strain ATCC BAA-149 / DSM 14245 / SRS30216).